Reading from the N-terminus, the 351-residue chain is UDP-N-acetylenolpyruvoylglucosamine reductase (351 aa).

An FAD-binding PCMH-type domain is found at 11 to 213 (GVGGSIACFI…KQVRDQVLRI (203 aa)). Arginine 158 is an active-site residue. Catalysis depends on serine 239, which acts as the Proton donor. Glutamate 343 is an active-site residue.

Belongs to the MurB family. FAD is required as a cofactor.

It is found in the cytoplasm. It catalyses the reaction UDP-N-acetyl-alpha-D-muramate + NADP(+) = UDP-N-acetyl-3-O-(1-carboxyvinyl)-alpha-D-glucosamine + NADPH + H(+). It participates in cell wall biogenesis; peptidoglycan biosynthesis. Its function is as follows. Cell wall formation. The sequence is that of UDP-N-acetylenolpyruvoylglucosamine reductase from Tropheryma whipplei (strain TW08/27) (Whipple's bacillus).